The chain runs to 783 residues: Endonuclease MutS2 (783 aa).

328–335 (GPNTGGKT) is a binding site for ATP. The region spanning 708 to 783 (LDLRGKRYEE…GSGCTIATLG (76 aa)) is the Smr domain.

This sequence belongs to the DNA mismatch repair MutS family. MutS2 subfamily. As to quaternary structure, homodimer. Binds to stalled ribosomes, contacting rRNA.

Endonuclease that is involved in the suppression of homologous recombination and thus may have a key role in the control of bacterial genetic diversity. Functionally, acts as a ribosome collision sensor, splitting the ribosome into its 2 subunits. Detects stalled/collided 70S ribosomes which it binds and splits by an ATP-hydrolysis driven conformational change. Acts upstream of the ribosome quality control system (RQC), a ribosome-associated complex that mediates the extraction of incompletely synthesized nascent chains from stalled ribosomes and their subsequent degradation. Probably generates substrates for RQC. The polypeptide is Endonuclease MutS2 (Streptococcus thermophilus (strain ATCC BAA-491 / LMD-9)).